Here is a 111-residue protein sequence, read N- to C-terminus: MYDSIMSVSARNALSRLSETVAEKGVGSASAPQAVPAAPGASFGEVLSQMTGSVSQKLQAAEATSIQGIKGDAPVRDVVSSVMEAEQSLQTVIAIRDKIVQAYLEISRMPI.

Belongs to the FliE family.

It is found in the bacterial flagellum basal body. This Brucella ovis (strain ATCC 25840 / 63/290 / NCTC 10512) protein is Flagellar hook-basal body complex protein FliE.